Here is a 333-residue protein sequence, read N- to C-terminus: Tetraacyldisaccharide 4'-kinase (333 aa).

Residue 55 to 62 coordinates ATP; that stretch reads TAGGNGKT.

The protein belongs to the LpxK family.

It carries out the reaction a lipid A disaccharide + ATP = a lipid IVA + ADP + H(+). The protein operates within glycolipid biosynthesis; lipid IV(A) biosynthesis; lipid IV(A) from (3R)-3-hydroxytetradecanoyl-[acyl-carrier-protein] and UDP-N-acetyl-alpha-D-glucosamine: step 6/6. Its function is as follows. Transfers the gamma-phosphate of ATP to the 4'-position of a tetraacyldisaccharide 1-phosphate intermediate (termed DS-1-P) to form tetraacyldisaccharide 1,4'-bis-phosphate (lipid IVA). The protein is Tetraacyldisaccharide 4'-kinase of Proteus mirabilis (strain HI4320).